The sequence spans 238 residues: Ribonuclease PH (238 aa).

Residues Arg86 and 124 to 126 (GTR) contribute to the phosphate site.

This sequence belongs to the RNase PH family. Homohexameric ring arranged as a trimer of dimers.

The enzyme catalyses tRNA(n+1) + phosphate = tRNA(n) + a ribonucleoside 5'-diphosphate. Phosphorolytic 3'-5' exoribonuclease that plays an important role in tRNA 3'-end maturation. Removes nucleotide residues following the 3'-CCA terminus of tRNAs; can also add nucleotides to the ends of RNA molecules by using nucleoside diphosphates as substrates, but this may not be physiologically important. Probably plays a role in initiation of 16S rRNA degradation (leading to ribosome degradation) during starvation. The sequence is that of Ribonuclease PH from Vibrio cholerae serotype O1 (strain ATCC 39315 / El Tor Inaba N16961).